Here is a 187-residue protein sequence, read N- to C-terminus: Peptide deformylase (187 aa).

Fe cation-binding residues include Cys-107 and His-149. Glu-150 is an active-site residue. His-153 is a Fe cation binding site.

This sequence belongs to the polypeptide deformylase family. Fe(2+) is required as a cofactor.

The catalysed reaction is N-terminal N-formyl-L-methionyl-[peptide] + H2O = N-terminal L-methionyl-[peptide] + formate. In terms of biological role, removes the formyl group from the N-terminal Met of newly synthesized proteins. Requires at least a dipeptide for an efficient rate of reaction. N-terminal L-methionine is a prerequisite for activity but the enzyme has broad specificity at other positions. The chain is Peptide deformylase from Synechocystis sp. (strain ATCC 27184 / PCC 6803 / Kazusa).